The chain runs to 124 residues: SPbeta prophage-derived uncharacterized protein YoqO (124 aa).

The next 2 membrane-spanning stretches (helical) occupy residues 54–74 and 88–108; these read LVVI…LLSF and VIFI…ISIM.

The protein resides in the cell membrane. This Bacillus subtilis (strain 168) protein is SPbeta prophage-derived uncharacterized protein YoqO (yoqO).